The chain runs to 82 residues: RNA-binding protein Hfq (82 aa).

Residues 11–71 form the Sm domain; the sequence is DTFLNHVRKT…ISTIMPGAPI (61 aa).

It belongs to the Hfq family. In terms of assembly, homohexamer.

In terms of biological role, RNA chaperone that binds small regulatory RNA (sRNAs) and mRNAs to facilitate mRNA translational regulation in response to envelope stress, environmental stress and changes in metabolite concentrations. Also binds with high specificity to tRNAs. The protein is RNA-binding protein Hfq of Bradyrhizobium sp. (strain BTAi1 / ATCC BAA-1182).